A 118-amino-acid polypeptide reads, in one-letter code: Holo-[acyl-carrier-protein] synthase (118 aa).

The Mg(2+) site is built by Asp-8 and Glu-60.

Belongs to the P-Pant transferase superfamily. AcpS family. The cofactor is Mg(2+).

The protein localises to the cytoplasm. It carries out the reaction apo-[ACP] + CoA = holo-[ACP] + adenosine 3',5'-bisphosphate + H(+). Its function is as follows. Transfers the 4'-phosphopantetheine moiety from coenzyme A to a Ser of acyl-carrier-protein. In Wolbachia sp. subsp. Drosophila simulans (strain wRi), this protein is Holo-[acyl-carrier-protein] synthase.